The following is a 576-amino-acid chain: MNIQLFLSDRIRHALIMAGAPDDSDAQLHPSTKAQFGDYQANGVMSAAKKQRIPPRELAERVLEHLDLSDIAKKVEIAGPGFINIFLNEQWISQKIESVFIGPKLGLTPVTPQRIVIDYSAPNVAKEMHVGHLRSTIIGDAMARTLSFLGHHVIRANHIGDWGTQFGMLIAYLEKIQHDHALEMVLSDLEHFYREAKKHYDEDEIFAQRARDYVVKLQSGDPYCREMWRKLVDITMTQNHLSYERLKVTLTPEDMMGESLYNDMLPNIVEDLIAKGVAVKDQGSVLVFLEEYQNKIGEPMGVVIQKKDGGYLYATTDIACVKYRCETLKADRILYYIDSRQNQHLAQVWTITRLAGYVPESVSLEHHMFGMMLGKDGKPFKTRTGGTVKLSDLLDEAVERAGQLIRGKNPDLNETDLNNLIQAVAIGAVKYADLSKNRTTDYIFDWDRMLSFEGNTAPYIQYAYSRVTSLFKKSGLDEKKIMSPVIIQEEKERSLAILLLQFEEMISTVARDGTPHLMCSYLYDLATRFSIFYEHCPILNAKNEQIRQSRLKLAWLTAKTLKLGLKNLGIETVERM.

Positions 122 to 132 (PNVAKEMHVGH) match the 'HIGH' region motif.

The protein belongs to the class-I aminoacyl-tRNA synthetase family. Monomer.

The protein localises to the cytoplasm. It carries out the reaction tRNA(Arg) + L-arginine + ATP = L-arginyl-tRNA(Arg) + AMP + diphosphate. The polypeptide is Arginine--tRNA ligase (Hamiltonella defensa subsp. Acyrthosiphon pisum (strain 5AT)).